Reading from the N-terminus, the 353-residue chain is Histidinol-phosphate aminotransferase (353 aa).

K218 is modified (N6-(pyridoxal phosphate)lysine).

The protein belongs to the class-II pyridoxal-phosphate-dependent aminotransferase family. Histidinol-phosphate aminotransferase subfamily. As to quaternary structure, homodimer. It depends on pyridoxal 5'-phosphate as a cofactor.

The enzyme catalyses L-histidinol phosphate + 2-oxoglutarate = 3-(imidazol-4-yl)-2-oxopropyl phosphate + L-glutamate. The protein operates within amino-acid biosynthesis; L-histidine biosynthesis; L-histidine from 5-phospho-alpha-D-ribose 1-diphosphate: step 7/9. This Synechococcus sp. (strain JA-2-3B'a(2-13)) (Cyanobacteria bacterium Yellowstone B-Prime) protein is Histidinol-phosphate aminotransferase.